We begin with the raw amino-acid sequence, 283 residues long: Ribose-phosphate pyrophosphokinase (283 aa).

Residues 34–36 and 89–90 each bind ATP; these read DGE and RQ. The Mg(2+) site is built by His-120 and Asp-159. Lys-182 is an active-site residue. Positions 184 and 208 each coordinate D-ribose 5-phosphate.

Belongs to the ribose-phosphate pyrophosphokinase family. Class III (archaeal) subfamily. Requires Mg(2+) as cofactor.

It localises to the cytoplasm. It carries out the reaction D-ribose 5-phosphate + ATP = 5-phospho-alpha-D-ribose 1-diphosphate + AMP + H(+). It participates in metabolic intermediate biosynthesis; 5-phospho-alpha-D-ribose 1-diphosphate biosynthesis; 5-phospho-alpha-D-ribose 1-diphosphate from D-ribose 5-phosphate (route I): step 1/1. Involved in the biosynthesis of the central metabolite phospho-alpha-D-ribosyl-1-pyrophosphate (PRPP) via the transfer of pyrophosphoryl group from ATP to 1-hydroxyl of ribose-5-phosphate (Rib-5-P). In Methanosarcina acetivorans (strain ATCC 35395 / DSM 2834 / JCM 12185 / C2A), this protein is Ribose-phosphate pyrophosphokinase.